Reading from the N-terminus, the 393-residue chain is MMILSKARCVELLEMPIETINGDWRFKASPHVTTRGVTEGVALLHMNSVRVVPGKGVVSRVDRANDFLSFLYHDISRISAGTCEPRESMLAVILPIDKVEEYVAKFRRVEPFTMGGFREACRALKFSAAVGTIFDRIMKDIFNRSPTLAMDGIPPLAKGLCFVLKSRGITPIRGGLLVGEIPKACGDHCPKCGAQYATRKSRFVTEIDLVGFDSTDNTCVLIEVKTYKNSVLPIAVLKKYNTQTWINWFLFGLMYPHLRQYTKSLIAVVSPAGRVVQLFNVRSPPITRRMISAFPFLGEYCPQMRRMMTAAAMTYVIKAPFVAAHVTGTDNVSIEVFSQSNKLPPNKWATDDAARREMERTRKARYRAKNRAVADPEDSPPGKRLRRGPKSST.

Residues 345–393 (PNKWATDDAARREMERTRKARYRAKNRAVADPEDSPPGKRLRRGPKSST) are disordered. Residues 349 to 361 (ATDDAARREMERT) are compositionally biased toward basic and acidic residues. Positions 383–393 (KRLRRGPKSST) are enriched in basic residues.

This is an uncharacterized protein from Ictalurid herpesvirus 1 (strain Auburn) (IcHV-1).